Reading from the N-terminus, the 312-residue chain is Carbonic anhydrase 4 (312 aa).

The first 18 residues, 1–18 (MRMLLALLALSAARPSAS), serve as a signal peptide directing secretion. An Alpha-carbonic anhydrase domain is found at 21-285 (SHWCYEVQAE…LGQRTVIKSG (265 aa)). Cystine bridges form between Cys-24–Cys-36 and Cys-46–Cys-229. His-88 (proton donor/acceptor) is an active-site residue. Zn(2+) is bound by residues His-115, His-117, and His-140. Residue 225–226 (TT) participates in substrate binding. Ser-284 is lipidated: GPI-anchor amidated serine. A propeptide spans 285–312 (GAPGRPLPWALPALLGPMLACLLAGFLR) (removed in mature form).

This sequence belongs to the alpha-carbonic anhydrase family. As to quaternary structure, interacts with SLC4A4. Zn(2+) is required as a cofactor. As to expression, expressed in the endothelium of the choriocapillaris in eyes (at protein level). Not expressed in the retinal epithelium at detectable levels.

The protein localises to the cell membrane. It carries out the reaction hydrogencarbonate + H(+) = CO2 + H2O. With respect to regulation, activated by histamine, L-adrenaline, D-phenylalanine, L- and D-histidine. Inhibited by coumarins, saccharin, sulfonamide derivatives such as acetazolamide and Foscarnet (phosphonoformate trisodium salt). Its function is as follows. Catalyzes the reversible hydration of carbon dioxide into bicarbonate and protons and thus is essential to maintaining intracellular and extracellular pH. May stimulate the sodium/bicarbonate transporter activity of SLC4A4 that acts in pH homeostasis. It is essential for acid overload removal from the retina and retina epithelium, and acid release in the choriocapillaris in the choroid. This chain is Carbonic anhydrase 4, found in Homo sapiens (Human).